Reading from the N-terminus, the 272-residue chain is 3-methyl-2-oxobutanoate hydroxymethyltransferase (272 aa).

Residues Asp-43 and Asp-82 each contribute to the Mg(2+) site. 3-methyl-2-oxobutanoate-binding positions include 43-44, Asp-82, and Lys-112; that span reads DS. Residue Glu-114 participates in Mg(2+) binding. Residue Glu-179 is the Proton acceptor of the active site.

It belongs to the PanB family. As to quaternary structure, homodecamer; pentamer of dimers. The cofactor is Mg(2+).

The protein localises to the cytoplasm. It carries out the reaction 3-methyl-2-oxobutanoate + (6R)-5,10-methylene-5,6,7,8-tetrahydrofolate + H2O = 2-dehydropantoate + (6S)-5,6,7,8-tetrahydrofolate. It functions in the pathway cofactor biosynthesis; (R)-pantothenate biosynthesis; (R)-pantoate from 3-methyl-2-oxobutanoate: step 1/2. Functionally, catalyzes the reversible reaction in which hydroxymethyl group from 5,10-methylenetetrahydrofolate is transferred onto alpha-ketoisovalerate to form ketopantoate. The sequence is that of 3-methyl-2-oxobutanoate hydroxymethyltransferase from Staphylococcus aureus (strain COL).